A 422-amino-acid polypeptide reads, in one-letter code: Elongation factor 1-alpha (422 aa).

The tr-type G domain maps to 5–221 (KPHMNLAVIG…DELKEPEKPS (217 aa)). The G1 stretch occupies residues 14–21 (GHIDHGKS). 14-21 (GHIDHGKS) contacts GTP. Position 21 (S21) interacts with Mg(2+). Residues 70 to 74 (GITID) are G2. The segment at 91-94 (DCPG) is G3. Residues 91 to 95 (DCPGH) and 146 to 149 (NKMD) each bind GTP. The tract at residues 146–149 (NKMD) is G4. Residues 185–187 (SAF) are G5.

It belongs to the TRAFAC class translation factor GTPase superfamily. Classic translation factor GTPase family. EF-Tu/EF-1A subfamily.

It localises to the cytoplasm. The catalysed reaction is GTP + H2O = GDP + phosphate + H(+). Functionally, GTP hydrolase that promotes the GTP-dependent binding of aminoacyl-tRNA to the A-site of ribosomes during protein biosynthesis. This chain is Elongation factor 1-alpha, found in Methanosarcina acetivorans (strain ATCC 35395 / DSM 2834 / JCM 12185 / C2A).